Reading from the N-terminus, the 132-residue chain is Photosystem II extrinsic protein U (132 aa).

A signal peptide spans 1-29 (MKRLLSWLTGALVMAGLLSSLVLPSAVYA).

Belongs to the PsbU family. In terms of assembly, PSII is composed of 1 copy each of membrane proteins PsbA, PsbB, PsbC, PsbD, PsbE, PsbF, PsbH, PsbI, PsbJ, PsbK, PsbL, PsbM, PsbT, PsbX, PsbY, PsbZ, Psb30/Ycf12, peripheral proteins PsbO, CyanoQ (PsbQ), PsbU, PsbV and a large number of cofactors. It forms dimeric complexes.

The protein localises to the cellular thylakoid membrane. Functionally, one of the extrinsic, lumenal subunits of photosystem II (PSII). PSII is a light-driven water plastoquinone oxidoreductase, using light energy to abstract electrons from H(2)O, generating a proton gradient subsequently used for ATP formation. The extrinsic proteins stabilize the structure of photosystem II oxygen-evolving complex (OEC), the ion environment of oxygen evolution and protect the OEC against heat-induced inactivation. In Synechococcus sp. (strain CC9902), this protein is Photosystem II extrinsic protein U.